The primary structure comprises 313 residues: MERTMTPIKAAIIGSGNIGTDLMIKILRTGSGIEMGALVGVDPASDGLERARRLGVFTTHEGLDGLRRSPIYKDIGIVFDATSAKAHERHAEQLRQDGKRAIDLTPAAVGPYIVPVVNLEENLNAVNVNMVTCGGQATIPIVAAVARVAPVPYAEIVASIASRSAGPGTRANIDEFTETTARAIEVVGGARRGKAIIVLNPAEPPLIMRDTVYCLALTQDQDAVRRSIHDMIDRVRGYVPGYRLKQEVQFEPLRDARAVGGEEDGPALKVSVFLEVEGAGHYLPSYAGNLDIMTSAALAVAERFARTLIEENA.

Position 15-18 (15-18) interacts with NAD(+); that stretch reads SGNI. Cysteine 133 acts as the Acyl-thioester intermediate in catalysis. NAD(+)-binding positions include 164–172 and asparagine 289; that span reads SAGPGTRAN.

This sequence belongs to the acetaldehyde dehydrogenase family.

The enzyme catalyses acetaldehyde + NAD(+) + CoA = acetyl-CoA + NADH + H(+). This chain is Acetaldehyde dehydrogenase, found in Rhizobium rhizogenes (strain K84 / ATCC BAA-868) (Agrobacterium radiobacter).